Consider the following 98-residue polypeptide: NADH-ubiquinone oxidoreductase chain 4L (98 aa).

The next 3 helical transmembrane spans lie at 1–21 (MMSI…GVLI), 28–48 (STLL…ALLI), and 59–79 (APLI…ALLV).

The protein belongs to the complex I subunit 4L family. In terms of assembly, core subunit of respiratory chain NADH dehydrogenase (Complex I) which is composed of 45 different subunits.

It is found in the mitochondrion inner membrane. It carries out the reaction a ubiquinone + NADH + 5 H(+)(in) = a ubiquinol + NAD(+) + 4 H(+)(out). Core subunit of the mitochondrial membrane respiratory chain NADH dehydrogenase (Complex I) which catalyzes electron transfer from NADH through the respiratory chain, using ubiquinone as an electron acceptor. Part of the enzyme membrane arm which is embedded in the lipid bilayer and involved in proton translocation. The protein is NADH-ubiquinone oxidoreductase chain 4L (MT-ND4L) of Lagorchestes hirsutus (Rufous hare-wallaby).